The primary structure comprises 89 residues: Small ribosomal subunit protein uS15 (89 aa).

The protein belongs to the universal ribosomal protein uS15 family. Part of the 30S ribosomal subunit. Forms a bridge to the 50S subunit in the 70S ribosome, contacting the 23S rRNA.

Its function is as follows. One of the primary rRNA binding proteins, it binds directly to 16S rRNA where it helps nucleate assembly of the platform of the 30S subunit by binding and bridging several RNA helices of the 16S rRNA. In terms of biological role, forms an intersubunit bridge (bridge B4) with the 23S rRNA of the 50S subunit in the ribosome. The protein is Small ribosomal subunit protein uS15 of Elusimicrobium minutum (strain Pei191).